We begin with the raw amino-acid sequence, 277 residues long: Thiazole synthase (277 aa).

The active-site Schiff-base intermediate with DXP is Lys116. Residues Gly177, 203–204, and 225–226 each bind 1-deoxy-D-xylulose 5-phosphate; these read AG and NT.

This sequence belongs to the ThiG family. In terms of assembly, homotetramer. Forms heterodimers with either ThiH or ThiS.

The protein localises to the cytoplasm. The catalysed reaction is [ThiS sulfur-carrier protein]-C-terminal-Gly-aminoethanethioate + 2-iminoacetate + 1-deoxy-D-xylulose 5-phosphate = [ThiS sulfur-carrier protein]-C-terminal Gly-Gly + 2-[(2R,5Z)-2-carboxy-4-methylthiazol-5(2H)-ylidene]ethyl phosphate + 2 H2O + H(+). It participates in cofactor biosynthesis; thiamine diphosphate biosynthesis. Catalyzes the rearrangement of 1-deoxy-D-xylulose 5-phosphate (DXP) to produce the thiazole phosphate moiety of thiamine. Sulfur is provided by the thiocarboxylate moiety of the carrier protein ThiS. In vitro, sulfur can be provided by H(2)S. The polypeptide is Thiazole synthase (Thermosynechococcus vestitus (strain NIES-2133 / IAM M-273 / BP-1)).